The chain runs to 338 residues: Ketol-acid reductoisomerase (NADP(+)) (338 aa).

The KARI N-terminal Rossmann domain maps to 1–181 (MNIYYDKDCD…GGGRAGIIET (181 aa)). NADP(+)-binding positions include 24-27 (YGSQ), arginine 47, serine 50, serine 52, and 82-85 (DEHQ). Residue histidine 107 is part of the active site. Glycine 133 is a binding site for NADP(+). The region spanning 182–327 (AFREETETDL…ERLRSMMPWI (146 aa)) is the KARI C-terminal knotted domain. 4 residues coordinate Mg(2+): aspartate 190, glutamate 194, glutamate 226, and glutamate 230. Serine 251 serves as a coordination point for substrate.

This sequence belongs to the ketol-acid reductoisomerase family. Mg(2+) serves as cofactor.

It catalyses the reaction (2R)-2,3-dihydroxy-3-methylbutanoate + NADP(+) = (2S)-2-acetolactate + NADPH + H(+). The enzyme catalyses (2R,3R)-2,3-dihydroxy-3-methylpentanoate + NADP(+) = (S)-2-ethyl-2-hydroxy-3-oxobutanoate + NADPH + H(+). The protein operates within amino-acid biosynthesis; L-isoleucine biosynthesis; L-isoleucine from 2-oxobutanoate: step 2/4. Its pathway is amino-acid biosynthesis; L-valine biosynthesis; L-valine from pyruvate: step 2/4. Functionally, involved in the biosynthesis of branched-chain amino acids (BCAA). Catalyzes an alkyl-migration followed by a ketol-acid reduction of (S)-2-acetolactate (S2AL) to yield (R)-2,3-dihydroxy-isovalerate. In the isomerase reaction, S2AL is rearranged via a Mg-dependent methyl migration to produce 3-hydroxy-3-methyl-2-ketobutyrate (HMKB). In the reductase reaction, this 2-ketoacid undergoes a metal-dependent reduction by NADPH to yield (R)-2,3-dihydroxy-isovalerate. The protein is Ketol-acid reductoisomerase (NADP(+)) of Nitrosococcus oceani (strain ATCC 19707 / BCRC 17464 / JCM 30415 / NCIMB 11848 / C-107).